Consider the following 1549-residue polypeptide: ATP-binding cassette sub-family C member 9 (1549 aa).

Over 1–30 (MSLSFCGNNISSYNINDGVLQNSCFVDALN) the chain is Extracellular. Residue Asn9 is glycosylated (N-linked (GlcNAc...) asparagine). A helical membrane pass occupies residues 31–51 (LVPHVFLLFITFPILFIGWGS). The Cytoplasmic segment spans residues 52-72 (QSSKVQIHHNTWLHFPGHNLR). A helical membrane pass occupies residues 73 to 93 (WILTFALLFVHVCEIAEGIVS). The Extracellular portion of the chain corresponds to 94 to 101 (DSRRESRH). A helical membrane pass occupies residues 102-122 (LHLFMPAVMGFVATTTSIVYY). The Cytoplasmic portion of the chain corresponds to 123–132 (HNIETSNFPK). The helical transmembrane segment at 133–153 (LLLALFLYWVMAFITKTIKLV) threads the bilayer. Residues 154-167 (KYCQSGLDISNLRF) lie on the Extracellular side of the membrane. Residues 168–188 (CITGMMVILNGLLMAVEINVI) traverse the membrane as a helical segment. Over 189 to 301 (RVRRYVFFMN…AFGRPILLSS (113 aa)) the chain is Cytoplasmic. The 301-residue stretch at 297–597 (ILLSSTFRYL…LSTVVRFAVK (301 aa)) folds into the ABC transmembrane type-1 1 domain. The helical transmembrane segment at 302–322 (TFRYLADLLGFAGPLCISGIV) threads the bilayer. Over 323–350 (QRVNETQNGTNNTTGISETLSSKEFLEN) the chain is Extracellular. 4 N-linked (GlcNAc...) asparagine glycosylation sites follow: Asn326, Asn330, Asn333, and Asn334. Residues 351-371 (AYVLAVLLFLALILQRTFLQA) form a helical membrane-spanning segment. Over 372 to 423 (SYYVTIETGINLRGALLAMIYNKILRLSTSNLSMGEMTLGQINNLVAIETNQ) the chain is Cytoplasmic. Residues 424–444 (LMWFLFLCPNLWAMPVQIIMG) form a helical membrane-spanning segment. Topologically, residues 445–455 (VILLYNLLGSS) are extracellular. The helical transmembrane segment at 456–476 (ALVGAAVIVLLAPIQYFIATK) threads the bilayer. Residues 477–531 (LAEAQKSTLDYSTERLKKTNEILKGIKLLKLYAWEHIFCKSVEETRMKELSSLKT) are Cytoplasmic-facing. The chain crosses the membrane as a helical span at residues 532–552 (FALYTSLSIFMNAAIPIAAVL). The Extracellular segment spans residues 553–571 (ATFVTHAYASGNNLKPAEA). The helical transmembrane segment at 572-592 (FASLSLFHILVTPLFLLSTVV) threads the bilayer. Residues 593–990 (RFAVKAIISV…TCWRYLTSGG (398 aa)) are Cytoplasmic-facing. The ABC transporter 1 domain occupies 672 to 912 (IKVTNGYFSW…DVELYEHWKT (241 aa)). An ATP-binding site is contributed by 705-712 (GQVGCGKS). The disordered stretch occupies residues 944 to 967 (REAKAQMEDEDEEEEEEEDEDDNM). Positions 951-966 (EDEDEEEEEEEDEDDN) are enriched in acidic residues. A helical membrane pass occupies residues 991 to 1011 (FFLLILMIFSKLLKHSVIVAI). An ABC transmembrane type-1 2 domain is found at 994 to 1274 (LILMIFSKLL…VVRNLADLEV (281 aa)). Residues 1012-1034 (DYWLATWTSEYSINNTGKADQTY) are Extracellular-facing. Residues 1035 to 1055 (YVAGFSILCGAGIFLCLVTSL) traverse the membrane as a helical segment. The Cytoplasmic segment spans residues 1056-1127 (TVEWMGLTAA…TLLCLSAIGM (72 aa)). A helical membrane pass occupies residues 1128–1148 (ISYATPVFLVALLPLGVAFYF). Over 1149 to 1245 (IQKYFRVASK…IASISGSSNS (97 aa)) the chain is Extracellular. A helical membrane pass occupies residues 1246–1266 (GLVGLGLLYALTITNYLNWVV). Residues 1267-1549 (RNLADLEVQM…LFSTLVMTNK (283 aa)) are Cytoplasmic-facing. In terms of domain architecture, ABC transporter 2 spans 1312–1546 (IKIHDLCVRY…KNGLFSTLVM (235 aa)). Residue 1346–1353 (GRTGSGKS) coordinates ATP.

This sequence belongs to the ABC transporter superfamily. ABCC family. Conjugate transporter (TC 3.A.1.208) subfamily. Interacts with KCNJ11. Interacts with KCNJ8.

It localises to the membrane. Its function is as follows. Subunit of ATP-sensitive potassium channels (KATP). Can form cardiac and smooth muscle-type KATP channels with KCNJ11. KCNJ11 forms the channel pore while ABCC9 is required for activation and regulation. Can form a sulfonylurea-sensitive but ATP-insensitive potassium channel with KCNJ8. In Homo sapiens (Human), this protein is ATP-binding cassette sub-family C member 9 (ABCC9).